Here is a 100-residue protein sequence, read N- to C-terminus: uncharacterized protein (100 aa).

The next 2 helical transmembrane spans lie at 30–50 and 69–89; these read FHIP…PLAF and FLLI…LPFF.

It localises to the cytoplasm. The protein resides in the nucleus membrane. This is an uncharacterized protein from Schizosaccharomyces pombe (strain 972 / ATCC 24843) (Fission yeast).